The sequence spans 381 residues: Alkanesulfonate monooxygenase (381 aa).

It belongs to the SsuD family. As to quaternary structure, homotetramer.

It carries out the reaction an alkanesulfonate + FMNH2 + O2 = an aldehyde + FMN + sulfite + H2O + 2 H(+). In terms of biological role, catalyzes the desulfonation of aliphatic sulfonates. In Escherichia coli O157:H7, this protein is Alkanesulfonate monooxygenase.